The following is a 145-amino-acid chain: Globin (145 aa).

Ser2 bears the N-acetylserine mark. Residues 2-145 (SLSAAEADLV…IVAALKAAGK (144 aa)) form the Globin domain. Residue His96 participates in heme b binding.

It belongs to the globin family. As to quaternary structure, monomer.

The polypeptide is Globin (Aplysia kurodai (Kuroda's sea hare)).